The sequence spans 591 residues: NADPH oxidase 1 (591 aa).

At 1 to 36 (MAGELRGSRGPLQRIQIAPREAPNLHLTMGNWLVNH) the chain is on the cytoplasmic side. The chain crosses the membrane as a helical span at residues 37-59 (WLSVLFLVSWLGLNIFLFVYAFL). At 60–72 (NYEKSDKYYYTRE) the chain is on the extracellular side. Residues 73-97 (ILGTALALARASALCLNFNSMMILI) traverse the membrane as a helical segment. The 235-residue stretch at 82-316 (RASALCLNFN…YIFERILRFY (235 aa)) folds into the Ferric oxidoreductase domain. Residues 98-130 (PVCRNLLSFLRGTCSFCNRTLRKPLDHNLTFHK) lie on the Cytoplasmic side of the membrane. Residues histidine 129 and histidine 143 each contribute to the heme site. The chain crosses the membrane as a helical span at residues 131–151 (LVAYMICIFTVIHIIAHLFNF). The Extracellular segment spans residues 152–195 (ERYRRSQQAMDGSLASVLSSLSHPEKEDSWLNPIQSPNMTVMYA). Residue asparagine 189 is glycosylated (N-linked (GlcNAc...) asparagine). Residues 196-216 (AFTSIAGLTGVIATVALVLMV) form a helical membrane-spanning segment. Residues 217 to 234 (TSAMEFIRRNYFELFWYT) are Cytoplasmic-facing. The chain crosses the membrane as a helical span at residues 235-255 (HHLFIVYIICLGIHGLGGIVR). The heme site is built by histidine 236 and histidine 248. The Extracellular segment spans residues 256–423 (GQTEESLGES…TVSEDVFQYE (168 aa)). N-linked (GlcNAc...) asparagine glycosylation is present at asparagine 269. The region spanning 317–418 (RSQQKVVITK…DGPFGTVSED (102 aa)) is the FAD-binding FR-type domain. FAD is bound at residue 365-371 (HPFTLTS). The helical transmembrane segment at 424 to 444 (VAVLVGAGIGVTPFASILKSI) threads the bilayer. The interval 424–563 (VAVLVGAGIG…GVFLCGPRTL (140 aa)) is interaction with NOXO1. Residues 445-591 (WYKFQRADNK…VQFYFNKETF (147 aa)) lie on the Cytoplasmic side of the membrane. At threonine 457 the chain carries Phosphothreonine.

In terms of assembly, NOX1, NOXA1, NOXO1, RAC1 and CYBA forms a functional multimeric complex supporting ROS production. Interacts with NOXO1. Interacts (via FAD-binding FR-type domain) with ARHGEF7 (via PH domain). Interacts with NOXA1. FAD serves as cofactor. Post-translationally, phosphorylation at Thr-457 mediated by PKC/PRKBC positively regulates its interaction with NOXA1 and enzyme activity. As to expression, expressed in colon and vascular smooth muscle cells (VSMC).

Its subcellular location is the cell projection. It localises to the invadopodium membrane. It is found in the cell membrane. It catalyses the reaction NADPH + 2 O2 = 2 superoxide + NADP(+) + H(+). The oxidase activity is potentiated by NOXA1 and NOXO1. Its function is as follows. NADPH oxidase that catalyzes the generation of superoxide from molecular oxygen utilizing NADPH as an electron donor. The sequence is that of NADPH oxidase 1 (Nox1) from Mus musculus (Mouse).